Consider the following 108-residue polypeptide: Anti-CBASS protein 2 (108 aa).

3 residues coordinate 3',3'-cGAMP: Q4, Y11, and K26.

It belongs to the Acb2 family. In terms of assembly, homohexamer in apo and 3',3'-cGAMP-bound form.

Functionally, antagonizes CBASS (cyclic oligonucleotide-based antiphage signaling system). Binds and sequesters host-produced 3',3'-cyclic GMP-AMP (cGAMP) (thus preventing host CapV activation) without degrading the cyclic nucleotide. Probably binds some other cyclic dinucleotides as well. This chain is Anti-CBASS protein 2, found in Pseudomonas phage JBD67.